We begin with the raw amino-acid sequence, 282 residues long: MANQLILLKKDFFTDEQQAVTVADRYPQDIFAEHTHEFCELVMVWRGNGLHVLNERPYRITRGDLFYIRAEDQHSYTSVNDLVLQNIIYCPERLKLNVNWQAMIPGFQGAQWHPHWRLGSMGMNQARQVINQLEHESNGRDPLANEMAELLFGQLVMTLKRHRYATDDLPATSRETLLDKLITALANSLECPFALDAFCQQEQCSERVLRQQFRAQTGMTINQYLRQVRICHAQYLLQHSPLMVSEISMQCGFEDSNYFSVVFTRETGMTPSQWRHLSNQSD.

An HTH araC/xylS-type domain is found at 179-277 (DKLITALANS…GMTPSQWRHL (99 aa)). 2 DNA-binding regions (H-T-H motif) span residues 196-217 (DAFC…RAQT) and 244-267 (VSEI…TRET).

In terms of assembly, binds DNA as a dimer.

Its subcellular location is the cytoplasm. Functionally, activates expression of the rhaSR operon in response to L-rhamnose. This is HTH-type transcriptional activator RhaR from Salmonella choleraesuis (strain SC-B67).